The chain runs to 174 residues: Shikimate kinase 2 (174 aa).

12–17 (GCGKTT) is a binding site for ATP. Threonine 16 and aspartate 32 together coordinate Mg(2+). Substrate-binding residues include aspartate 34, arginine 58, and glycine 79. An LID domain region spans residues 112–126 (QAAPEEDLRPTLTGK). Arginine 120 lines the ATP pocket. Position 139 (arginine 139) interacts with substrate.

It belongs to the shikimate kinase family. AroL subfamily. In terms of assembly, monomer. The cofactor is Mg(2+).

Its subcellular location is the cytoplasm. It catalyses the reaction shikimate + ATP = 3-phosphoshikimate + ADP + H(+). The protein operates within metabolic intermediate biosynthesis; chorismate biosynthesis; chorismate from D-erythrose 4-phosphate and phosphoenolpyruvate: step 5/7. Functionally, catalyzes the specific phosphorylation of the 3-hydroxyl group of shikimic acid using ATP as a cosubstrate. This Escherichia coli O1:K1 / APEC protein is Shikimate kinase 2.